The primary structure comprises 309 residues: Ribonuclease Z (309 aa).

Residues His63, His65, Asp67, His68, His141, Asp212, and His270 each coordinate Zn(2+). Asp67 acts as the Proton acceptor in catalysis.

Belongs to the RNase Z family. In terms of assembly, homodimer. The cofactor is Zn(2+).

It catalyses the reaction Endonucleolytic cleavage of RNA, removing extra 3' nucleotides from tRNA precursor, generating 3' termini of tRNAs. A 3'-hydroxy group is left at the tRNA terminus and a 5'-phosphoryl group is left at the trailer molecule.. In terms of biological role, zinc phosphodiesterase, which displays some tRNA 3'-processing endonuclease activity. Probably involved in tRNA maturation, by removing a 3'-trailer from precursor tRNA. The polypeptide is Ribonuclease Z (Lactobacillus gasseri (strain ATCC 33323 / DSM 20243 / BCRC 14619 / CIP 102991 / JCM 1131 / KCTC 3163 / NCIMB 11718 / NCTC 13722 / AM63)).